We begin with the raw amino-acid sequence, 210 residues long: Sortase A (210 aa).

Residues 1 to 5 (MNKQR) are Cytoplasmic-facing. Residues 6–26 (IYSIVAILLFVVGGVLIGKPF) traverse the membrane as a helical segment. Over 27–210 (YDGYQAEKKQ…GDLVGTKAKK (184 aa)) the chain is Extracellular. H126 (proton donor/acceptor) is an active-site residue. Residue C187 is the Acyl-thioester intermediate of the active site.

The protein belongs to the bacterial sortase family. Class A subfamily.

It is found in the cell membrane. With respect to regulation, inhibited by thiol-reactive reagents. Transpeptidase that anchors surface proteins to the cell wall. Recognizes and modifies its substrate by proteolytic cleavage of a C-terminal sorting signal. Following cleavage, a covalent intermediate is formed via a thioester bond between the sortase and its substrate, which is then transferred and covalently attached to the cell wall. This sortase recognizes a Leu-Pro-x-Thr-Gly (LPXTG) motif, which is cleaved by the sortase between the threonine and glycine residues. Important for growth in macrophages. May be critical in the early stages of inhalation anthrax. The protein is Sortase A of Bacillus anthracis.